A 131-amino-acid chain; its full sequence is Peptide methionine sulfoxide reductase MsrB (131 aa).

Residues 9 to 131 (DEDWKKELTP…NSASLKFQKE (123 aa)) enclose the MsrB domain. Residues C48, C51, C97, and C100 each coordinate Zn(2+). The active-site Nucleophile is the C120.

It belongs to the MsrB Met sulfoxide reductase family. Requires Zn(2+) as cofactor.

It catalyses the reaction L-methionyl-[protein] + [thioredoxin]-disulfide + H2O = L-methionyl-(R)-S-oxide-[protein] + [thioredoxin]-dithiol. In Leptospira interrogans serogroup Icterohaemorrhagiae serovar Lai (strain 56601), this protein is Peptide methionine sulfoxide reductase MsrB.